Reading from the N-terminus, the 115-residue chain is NADH-ubiquinone oxidoreductase chain 3 (115 aa).

Helical transmembrane passes span 4-24, 55-75, and 87-107; these read LVAL…AFWL, FFLV…LLPL, and MMLT…YEWM.

The protein belongs to the complex I subunit 3 family. In terms of assembly, core subunit of respiratory chain NADH dehydrogenase (Complex I) which is composed of 45 different subunits. Interacts with TMEM186. Interacts with TMEM242.

Its subcellular location is the mitochondrion inner membrane. It catalyses the reaction a ubiquinone + NADH + 5 H(+)(in) = a ubiquinol + NAD(+) + 4 H(+)(out). In terms of biological role, core subunit of the mitochondrial membrane respiratory chain NADH dehydrogenase (Complex I) which catalyzes electron transfer from NADH through the respiratory chain, using ubiquinone as an electron acceptor. Essential for the catalytic activity of complex I. The protein is NADH-ubiquinone oxidoreductase chain 3 of Habromys lophurus (Crested-tailed deer mouse).